Here is a 464-residue protein sequence, read N- to C-terminus: L-aspartate oxidase (464 aa).

Residues 8–11 and 37–44 contribute to the FAD site; these read SGLA and NSYLAQAG. The active-site Proton donor/acceptor is the Arg248. FAD is bound by residues Glu329 and 345 to 346; that span reads SL.

This sequence belongs to the FAD-dependent oxidoreductase 2 family. NadB subfamily. The cofactor is FAD.

The protein resides in the cytoplasm. The enzyme catalyses L-aspartate + O2 = iminosuccinate + H2O2. Its pathway is cofactor biosynthesis; NAD(+) biosynthesis; iminoaspartate from L-aspartate (oxidase route): step 1/1. In terms of biological role, catalyzes the oxidation of L-aspartate to iminoaspartate, the first step in the de novo biosynthesis of NAD(+). In Pyrococcus furiosus (strain ATCC 43587 / DSM 3638 / JCM 8422 / Vc1), this protein is L-aspartate oxidase (nadB).